A 207-amino-acid polypeptide reads, in one-letter code: MARSKTSQRWLKEHFDDPYVKMAQRDGYRSRASYKLLEIQEKDRILRPGMTVVDLGAAPGGWSQVTSRVIGDRGRLIASDILEMDSIPDVTFIQGDFTEDAVFARILEAIGDHPVDLVISDMAPNMSGVRAADQPRAMYLCELALDLAGRVLRPGGDFLIKIFQGEGFDQYHKQAREMFDKVQMRKPLSSRDRSREQYLLARGFRGE.

5 residues coordinate S-adenosyl-L-methionine: G60, W62, D80, D96, and D121. Residue K161 is the Proton acceptor of the active site.

The protein belongs to the class I-like SAM-binding methyltransferase superfamily. RNA methyltransferase RlmE family.

It localises to the cytoplasm. It catalyses the reaction uridine(2552) in 23S rRNA + S-adenosyl-L-methionine = 2'-O-methyluridine(2552) in 23S rRNA + S-adenosyl-L-homocysteine + H(+). Its function is as follows. Specifically methylates the uridine in position 2552 of 23S rRNA at the 2'-O position of the ribose in the fully assembled 50S ribosomal subunit. The polypeptide is Ribosomal RNA large subunit methyltransferase E (Pseudomonas aeruginosa (strain UCBPP-PA14)).